The primary structure comprises 163 residues: UPF0262 protein RPB_4349 (163 aa).

Belongs to the UPF0262 family.

In Rhodopseudomonas palustris (strain HaA2), this protein is UPF0262 protein RPB_4349.